The following is a 272-amino-acid chain: SWIRM domain-containing protein laf2 (272 aa).

A disordered region spans residues His86–Gly148. Composition is skewed to low complexity over residues Ser95–Gly120 and Arg127–Ile136. Residues Ser130 and Ser132 each carry the phosphoserine modification. Thr135 carries the phosphothreonine modification. The 91-residue stretch at Leu182–Asp272 folds into the SWIRM domain.

In terms of assembly, component of the RPD3C(L) complex.

The protein localises to the nucleus. Component of the RPD3C(L) histone deacetylase complex (HDAC) responsible for the deacetylation of lysine residues on the N-terminal part of the core histones (H2A, H2B, H3 and H4). Histone deacetylation gives a tag for epigenetic repression and plays an important role in transcriptional regulation, cell cycle progression and developmental events. The chain is SWIRM domain-containing protein laf2 (laf2) from Schizosaccharomyces pombe (strain 972 / ATCC 24843) (Fission yeast).